Consider the following 396-residue polypeptide: Tyrosine--tRNA ligase (396 aa).

Positions 39–48 (PTAPDLHLGH) match the 'HIGH' region motif. The short motif at 223–227 (KMSKS) is the 'KMSKS' region element. ATP is bound at residue K226. An S4 RNA-binding domain is found at 334–395 (LPVPQLLKQA…GKRKFARVTV (62 aa)).

This sequence belongs to the class-I aminoacyl-tRNA synthetase family. TyrS type 2 subfamily. Homodimer.

It localises to the cytoplasm. The enzyme catalyses tRNA(Tyr) + L-tyrosine + ATP = L-tyrosyl-tRNA(Tyr) + AMP + diphosphate + H(+). Its function is as follows. Catalyzes the attachment of tyrosine to tRNA(Tyr) in a two-step reaction: tyrosine is first activated by ATP to form Tyr-AMP and then transferred to the acceptor end of tRNA(Tyr). The sequence is that of Tyrosine--tRNA ligase from Thiobacillus denitrificans (strain ATCC 25259 / T1).